A 327-amino-acid polypeptide reads, in one-letter code: Endochitinase CH5B (327 aa).

Residues 1–26 (MKKNRMMIMICSVGVVWMLLVGGSYG) form the signal peptide. The region spanning 27–67 (EQCGRQAGGALCPGGNCCSQFGWCGSTTDYCGKDCQSQCGG) is the Chitin-binding type-1 domain. Disulfide bonds link C29/C44, C38/C50, C43/C57, C61/C65, C96/C158, C169/C177, and C276/C308. The Proton donor role is filled by E140. The propeptide at 317-327 (SLFLSDLVTSQ) is removed in mature form.

This sequence belongs to the glycosyl hydrolase 19 family. Chitinase class I subfamily.

It is found in the vacuole. It catalyses the reaction Random endo-hydrolysis of N-acetyl-beta-D-glucosaminide (1-&gt;4)-beta-linkages in chitin and chitodextrins.. In terms of biological role, defense against chitin-containing fungal pathogens. The protein is Endochitinase CH5B of Phaseolus vulgaris (Kidney bean).